The following is a 101-amino-acid chain: Small ribosomal subunit protein uS14 (101 aa).

A disordered region spans residues Arg-53–Gly-72. The segment covering Arg-61 to Pro-70 has biased composition (basic and acidic residues).

It belongs to the universal ribosomal protein uS14 family. In terms of assembly, part of the 30S ribosomal subunit. Contacts proteins S3 and S10.

Its function is as follows. Binds 16S rRNA, required for the assembly of 30S particles and may also be responsible for determining the conformation of the 16S rRNA at the A site. The protein is Small ribosomal subunit protein uS14 of Corynebacterium glutamicum (strain ATCC 13032 / DSM 20300 / JCM 1318 / BCRC 11384 / CCUG 27702 / LMG 3730 / NBRC 12168 / NCIMB 10025 / NRRL B-2784 / 534).